The primary structure comprises 489 residues: Cytochrome P450 302a1, mitochondrial (489 aa).

Residue Cys434 coordinates heme.

The protein belongs to the cytochrome P450 family. It depends on heme as a cofactor. In terms of tissue distribution, complex coexpression pattern of dib (disembodied) and sad (shade) in the early embryo that restricts to the prothoracic gland cells of the developing ring gland during late embryogenesis. In larvae and adult, coexpression is seen in prothoracic gland and follicle cells of the ovary. In adults, coexpression is seen in the follicle cells.

The protein resides in the mitochondrion membrane. The enzyme catalyses 2,22-dideoxyecdysone + 2 reduced [adrenodoxin] + O2 + 2 H(+) = 2-deoxyecdysone + 2 oxidized [adrenodoxin] + H2O. The protein operates within steroid biosynthesis; ecdysteroid biosynthesis. Functionally, required for CNS development; negatively regulates glial cell division in the embryonic midline. Involved in the metabolism of insect hormones; responsible for ecdysteroid C22-hydroxylase activity. May be involved in the breakdown of synthetic insecticides. The chain is Cytochrome P450 302a1, mitochondrial from Drosophila melanogaster (Fruit fly).